The primary structure comprises 148 residues: Endoribonuclease YbeY (148 aa).

3 residues coordinate Zn(2+): His102, His106, and His112.

Belongs to the endoribonuclease YbeY family. Requires Zn(2+) as cofactor.

The protein localises to the cytoplasm. Single strand-specific metallo-endoribonuclease involved in late-stage 70S ribosome quality control and in maturation of the 3' terminus of the 16S rRNA. The protein is Endoribonuclease YbeY of Phytoplasma mali (strain AT).